Here is a 250-residue protein sequence, read N- to C-terminus: HTH-type transcriptional regulator SarS (250 aa).

2 DNA-binding regions (H-T-H motif) span residues 53–76 (FKKI…VLVK) and 177–200 (LKDL…NLKK).

The protein belongs to the SarA family.

It is found in the cytoplasm. Transcriptional regulator that controls expression of some virulence factors in a cell density-dependent manner. The polypeptide is HTH-type transcriptional regulator SarS (sarS) (Staphylococcus aureus (strain Mu3 / ATCC 700698)).